A 551-amino-acid chain; its full sequence is UvrABC system protein C (551 aa).

In terms of domain architecture, GIY-YIG spans 12-87 (EKPGVYIFKN…IFKHKPKYNI (76 aa)). In terms of domain architecture, UVR spans 193–228 (EFVKDYIEQKMNYHSKMLDFENAAKYRDLLLSFEKL).

It belongs to the UvrC family. In terms of assembly, interacts with UvrB in an incision complex.

The protein localises to the cytoplasm. The UvrABC repair system catalyzes the recognition and processing of DNA lesions. UvrC both incises the 5' and 3' sides of the lesion. The N-terminal half is responsible for the 3' incision and the C-terminal half is responsible for the 5' incision. The polypeptide is UvrABC system protein C (Thermosipho africanus (strain TCF52B)).